A 453-amino-acid chain; its full sequence is MEELGVKRRIVLVPVPAQGHVTPIMQLGKALYSKGFSITVVLTQYNRVSSSKDFSDFHFLTIPGSLTESDLKNLGPFKFLFKLNQICEASFKQCIGQLLQEQGNDIACVVYDEYMYFSQAAVKEFQLPSVLFSTTSATAFVCRSVLSRVNAESFLLDMKDPKVSDKEFPGLHPLRYKDLPTSAFGPLESILKVYSETVNIRTASAVIINSTSCLESSSLAWLQKQLQVPVYPIGPLHIAASAPSSLLEEDRSCLEWLNKQKIGSVIYISLGSLALMETKDMLEMAWGLRNSNQPFLWVIRPGSIPGSEWTESLPEEFSRLVSERGYIVKWAPQIEVLRHPAVGGFWSHCGWNSTLESIGEGVPMICRPFTGDQKVNARYLERVWRIGVQLEGELDKGTVERAVERLIMDEEGAEMRKRVINLKEKLQASVKSRGSSFSSLDNFVNSLKMMNFM.

UDP-alpha-D-glucose is bound by residues serine 272, 331-333 (APQ), 348-356 (HCGWNSTLE), and 370-373 (TGDQ).

The protein belongs to the UDP-glycosyltransferase family.

Functionally, possesses low quercetin 3-O-glucosyltransferase and 7-O-glucosyltransferase activities in vitro. In Arabidopsis thaliana (Mouse-ear cress), this protein is UDP-glycosyltransferase 76E1 (UGT76E1).